Consider the following 621-residue polypeptide: DnaJ homolog subfamily C member 2 (621 aa).

Residue Met1 is modified to N-acetylmethionine. The tract at residues 23-31 (STLCQVEPV) is epitope (recognized by CD8(+) cytotoxic T-lymphocytes). Phosphoserine occurs at positions 47, 49, 60, and 63. In terms of domain architecture, J spans 88–161 (DHYAVLGLGH…VKRRAFNSVD (74 aa)). The tract at residues 160-250 (VDPTFDNSVP…RDERRWIEKQ (91 aa)) is ZRF1-UBD. 2 disordered regions span residues 294–315 (EKKAKAEAKRKEQEAKEKQRQA) and 426–453 (KEEAEARMRQASKNTEKSTGGGGNGSKN). SANT domains lie at 449-511 (NGSK…KLDP) and 549-604 (TDFT…EMVK).

As to quaternary structure, component of ribosome-associated complex (RAC), a heterodimer composed of Hsp70/DnaK-type chaperone HSPA14 and Hsp40/DnaJ-type chaperone DNAJC2. Interacts (via ZRF1-UBD region) with ID1. Phosphorylated in M (mitotic) phase. In terms of tissue distribution, widely expressed.

The protein resides in the nucleus. It is found in the cytoplasm. It localises to the cytosol. Acts both as a chaperone in the cytosol and as a chromatin regulator in the nucleus. When cytosolic, acts as a molecular chaperone: component of the ribosome-associated complex (RAC), a complex involved in folding or maintaining nascent polypeptides in a folding-competent state. In the RAC complex, stimulates the ATPase activity of the ribosome-associated pool of Hsp70-type chaperones HSPA14 that bind to the nascent polypeptide chain. When nuclear, mediates the switching from polycomb-repressed genes to an active state: specifically recruited at histone H2A ubiquitinated at 'Lys-119' (H2AK119ub), and promotes the displacement of the polycomb PRC1 complex from chromatin, thereby facilitating transcription activation. The protein is DnaJ homolog subfamily C member 2 (DNAJC2) of Homo sapiens (Human).